The primary structure comprises 215 residues: Ribonuclease T (215 aa).

The Exonuclease domain occupies 20–194; the sequence is VVIDVETAGF…YDTLQTAKLF (175 aa). 4 residues coordinate Mg(2+): aspartate 23, glutamate 25, histidine 181, and aspartate 186. The active-site Proton donor/acceptor is the histidine 181.

Belongs to the RNase T family. As to quaternary structure, homodimer. Requires Mg(2+) as cofactor.

In terms of biological role, trims short 3' overhangs of a variety of RNA species, leaving a one or two nucleotide 3' overhang. Responsible for the end-turnover of tRNA: specifically removes the terminal AMP residue from uncharged tRNA (tRNA-C-C-A). Also appears to be involved in tRNA biosynthesis. The polypeptide is Ribonuclease T (Yersinia pestis).